We begin with the raw amino-acid sequence, 384 residues long: GTPase Obg (384 aa).

Residues 1 to 159 (MKFVDEVEIR…RPLKLELMLL (159 aa)) enclose the Obg domain. The segment at 72-94 (NGMGKNCTGRRGNDIVLPVPPGT) is disordered. In terms of domain architecture, OBG-type G spans 160–333 (ADVGLLGMPN…LCREVMSYLE (174 aa)). GTP contacts are provided by residues 166 to 173 (GMPNAGKS), 191 to 195 (FTTLI), 213 to 216 (DIPG), 283 to 286 (NKVD), and 314 to 316 (AAL). Mg(2+) contacts are provided by Ser173 and Thr193. A disordered region spans residues 358–384 (EEVLEEEMDDEDDDDDDDHDVEVIYQK). Over residues 360–377 (VLEEEMDDEDDDDDDDHD) the composition is skewed to acidic residues.

It belongs to the TRAFAC class OBG-HflX-like GTPase superfamily. OBG GTPase family. Monomer. Mg(2+) is required as a cofactor.

Its subcellular location is the cytoplasm. An essential GTPase which binds GTP, GDP and possibly (p)ppGpp with moderate affinity, with high nucleotide exchange rates and a fairly low GTP hydrolysis rate. Plays a role in control of the cell cycle, stress response, ribosome biogenesis and in those bacteria that undergo differentiation, in morphogenesis control. The protein is GTPase Obg of Idiomarina loihiensis (strain ATCC BAA-735 / DSM 15497 / L2-TR).